A 238-amino-acid chain; its full sequence is Complement C1q-like protein 4 (238 aa).

The first 15 residues, 1–15 (MVLLLLVAIPLLVHS), serve as a signal peptide directing secretion. Positions 37 to 102 (SRGQGPDGAP…PGPGPGGAAP (66 aa)) are disordered. A Collagen-like domain is found at 53–96 (PPGAKGEVGRRGKAGLRGPPGPPGPRGPPGEPGRPGPPGPPGPG). A compositionally biased stretch (pro residues) spans 71-96 (PPGPPGPRGPPGEPGRPGPPGPPGPG). The 134-residue stretch at 105–238 (GYVPRIAFYA…TFSGFIIYPD (134 aa)) folds into the C1q domain.

As to quaternary structure, forms homooligomers, predominantly dimers or trimers. Forms heterooligomers with C1QL1, C1QL2 and C1QL3, when proteins are coexpressed; this interaction does not occur after secretion. Interacts with ADGRB3. In terms of tissue distribution, highly expressed in testis and adipose tissue, brown adipose tissue expressing higher levels than subcutaneous and visceral white adipose tissue. In gonadal fat pad, expressed at lower levels in adipocytes than in the stromal vascular fraction (VSP), which contains preadipocytes, fibroblasts, endothelial cells and occasional immune cells. Expression exhibits sexually dimorphism, with higher levels in females than in males.

It localises to the secreted. In terms of biological role, may regulate the number of excitatory synapses that are formed on hippocampus neurons. Has no effect on inhibitory synapses. May inhibit adipocyte differentiation at an early stage of the process. The protein is Complement C1q-like protein 4 (C1ql4) of Mus musculus (Mouse).